Consider the following 269-residue polypeptide: Tryptophan synthase alpha chain (269 aa).

Residues E49 and D60 each act as proton acceptor in the active site.

Belongs to the TrpA family. Tetramer of two alpha and two beta chains.

The catalysed reaction is (1S,2R)-1-C-(indol-3-yl)glycerol 3-phosphate + L-serine = D-glyceraldehyde 3-phosphate + L-tryptophan + H2O. It functions in the pathway amino-acid biosynthesis; L-tryptophan biosynthesis; L-tryptophan from chorismate: step 5/5. Functionally, the alpha subunit is responsible for the aldol cleavage of indoleglycerol phosphate to indole and glyceraldehyde 3-phosphate. The polypeptide is Tryptophan synthase alpha chain (Proteus mirabilis (strain HI4320)).